The following is a 37-amino-acid chain: Gene 40 protein (37 aa).

The polypeptide is Gene 40 protein (40) (Mycobacterium phage L5 (Mycobacteriophage L5)).